The following is a 271-amino-acid chain: Formamidopyrimidine-DNA glycosylase (271 aa).

Pro2 (schiff-base intermediate with DNA) is an active-site residue. Glu3 serves as the catalytic Proton donor. Lys57 serves as the catalytic Proton donor; for beta-elimination activity. 3 residues coordinate DNA: His90, Arg109, and Lys151. An FPG-type zinc finger spans residues 236 to 270 (HVYGRGGETCTQCGNLLSEIRLGQRTTVFCGICQT). Catalysis depends on Arg260, which acts as the Proton donor; for delta-elimination activity.

Belongs to the FPG family. In terms of assembly, monomer. The cofactor is Zn(2+).

The catalysed reaction is Hydrolysis of DNA containing ring-opened 7-methylguanine residues, releasing 2,6-diamino-4-hydroxy-5-(N-methyl)formamidopyrimidine.. It carries out the reaction 2'-deoxyribonucleotide-(2'-deoxyribose 5'-phosphate)-2'-deoxyribonucleotide-DNA = a 3'-end 2'-deoxyribonucleotide-(2,3-dehydro-2,3-deoxyribose 5'-phosphate)-DNA + a 5'-end 5'-phospho-2'-deoxyribonucleoside-DNA + H(+). Involved in base excision repair of DNA damaged by oxidation or by mutagenic agents. Acts as a DNA glycosylase that recognizes and removes damaged bases. Has a preference for oxidized purines, such as 7,8-dihydro-8-oxoguanine (8-oxoG). Has AP (apurinic/apyrimidinic) lyase activity and introduces nicks in the DNA strand. Cleaves the DNA backbone by beta-delta elimination to generate a single-strand break at the site of the removed base with both 3'- and 5'-phosphates. The chain is Formamidopyrimidine-DNA glycosylase from Shewanella sp. (strain MR-7).